The sequence spans 633 residues: Probable sodium/potassium/calcium exchanger CG1090 (633 aa).

The signal sequence occupies residues 1–21 (MWNMGLLFLIYYCVSIYSAKG). The Extracellular segment spans residues 22 to 111 (DTKDGQVLPL…PLMNKWARQH (90 aa)). A helical transmembrane segment spans residues 112 to 132 (GGLILHILVAVFTFFGLAIVC). At 133–157 (DEYFVASLDRLCEELKLSPDVAGAT) the chain is on the cytoplasmic side. The stretch at 153 to 193 (VAGATFMAAGSSAPELATVVIGVFFAKDDIGISGVIGSAVF) is one Alpha-1 repeat. Residues 158-178 (FMAAGSSAPELATVVIGVFFA) form a helical membrane-spanning segment. The Extracellular portion of the chain corresponds to 179-181 (KDD). A helical membrane pass occupies residues 182 to 202 (IGISGVIGSAVFNIMFVISVC). Residues 203-220 (ALCSGTVCQLNWWPLVRD) lie on the Cytoplasmic side of the membrane. Transmembrane regions (helical) follow at residues 221-241 (CFFY…DVIS) and 242-262 (CFES…LHFN). Residues 263 to 427 (TELERWALGL…EPRRDPLLRP (165 aa)) lie on the Extracellular side of the membrane. 3 stretches are compositionally biased toward polar residues: residues 298–310 (YTQE…QGQK), 320–333 (AKPQ…SDPN), and 395–405 (QVVSTQATSAG). Positions 298 to 422 (YTQESVGQTQ…TDKQREPRRD (125 aa)) are disordered. Positions 411–422 (KSTDKQREPRRD) are enriched in basic and acidic residues. A helical transmembrane segment spans residues 428–448 (MEGGLPALVSWYVVYPIHFLC). At 449-468 (KKTMPDCRQEQYRNWYPFTF) the chain is on the cytoplasmic side. Residues 469 to 489 (LMSMVWISFYSYFMVWMITVI) form a helical membrane-spanning segment. Residues 490 to 500 (GSTLAIPDTVM) are Extracellular-facing. Residues 501–521 (GLTFVAAGVSVPDALSSIAVI) traverse the membrane as a helical segment. One copy of the Alpha-2 repeat lies at 506 to 537 (AAGVSVPDALSSIAVIKEGFGDMAVSNAIGSN). Residues 522–535 (KEGFGDMAVSNAIG) lie on the Cytoplasmic side of the membrane. A helical membrane pass occupies residues 536 to 556 (SNVFDILVCLGLPWFIQTAII). At 557–568 (KPGSHVNVISKG) the chain is on the extracellular side. A helical membrane pass occupies residues 569 to 589 (LAYSTLSLFSTVVFLILSTHL). Over 590–597 (NGWKLDKR) the chain is Cytoplasmic. A helical transmembrane segment spans residues 598–618 (LGIILMVWYLFFITLASLYEL). The Extracellular segment spans residues 619-633 (NVFGYMNPPECPSTY).

The protein belongs to the Ca(2+):cation antiporter (CaCA) (TC 2.A.19) family. SLC24A subfamily.

The protein resides in the membrane. May function in the removal and maintenance of calcium homeostasis. Transports one Ca(2+) and 1 K(+) in exchange for 4 Na(+). The protein is Probable sodium/potassium/calcium exchanger CG1090 of Drosophila melanogaster (Fruit fly).